Here is a 185-residue protein sequence, read N- to C-terminus: Ribosome-recycling factor (185 aa).

The protein belongs to the RRF family.

The protein localises to the cytoplasm. In terms of biological role, responsible for the release of ribosomes from messenger RNA at the termination of protein biosynthesis. May increase the efficiency of translation by recycling ribosomes from one round of translation to another. The chain is Ribosome-recycling factor from Chromohalobacter salexigens (strain ATCC BAA-138 / DSM 3043 / CIP 106854 / NCIMB 13768 / 1H11).